A 448-amino-acid polypeptide reads, in one-letter code: MAAPDRDTITAIATPPGKGGVGIVRISGSNLGPVLDALLGRPPRPRYAEFRHFLDADGRAIDSGIALYFPAPRSFTGENVLELHGHGGPVVLDLLLRRTLQLGCRLARPGEFSERAYLNGKLDLAQAEAIADLIDSSTEESARSAQRSLQGEFSAHIHHLQECLVRLRTYVEAAIDFSDEDIDLLDDATLGHEITGLLDELDTIDTKAHQGALLREGLTTVIAGRPNVGKSSLLNALAGRDLAIVTEIPGTTRDLLRESLQVGGLPLHIVDTAGLRDSEDPIEREGIRRARDALANADCILLVCDARHTEAGDALPADLPETIPLIRIFNKIDLTGAPASLTVERETTVIHLSARTGEGVDLLRQEIIRRAGYKKGTEGVFSARRRHLDAIRRARAAVANARLYLHTKTAELLAEELRAAQKALGEITGEFTNEDLLNRIFSSFCLGK.

The (6S)-5-formyl-5,6,7,8-tetrahydrofolate site is built by R25, E82, and K121. The 156-residue stretch at 217 to 372 (GLTTVIAGRP…LRQEIIRRAG (156 aa)) folds into the TrmE-type G domain. N227 lines the K(+) pocket. GTP is bound by residues 227-232 (NVGKSS), 246-252 (TEIPGTT), 271-274 (DTAG), and 353-355 (SAR). S231 contacts Mg(2+). Residues T246, I248, and T251 each coordinate K(+). T252 contacts Mg(2+). (6S)-5-formyl-5,6,7,8-tetrahydrofolate is bound at residue K448.

The protein belongs to the TRAFAC class TrmE-Era-EngA-EngB-Septin-like GTPase superfamily. TrmE GTPase family. In terms of assembly, homodimer. Heterotetramer of two MnmE and two MnmG subunits. Requires K(+) as cofactor.

Its subcellular location is the cytoplasm. In terms of biological role, exhibits a very high intrinsic GTPase hydrolysis rate. Involved in the addition of a carboxymethylaminomethyl (cmnm) group at the wobble position (U34) of certain tRNAs, forming tRNA-cmnm(5)s(2)U34. The chain is tRNA modification GTPase MnmE from Methylococcus capsulatus (strain ATCC 33009 / NCIMB 11132 / Bath).